We begin with the raw amino-acid sequence, 361 residues long: Phosphoserine aminotransferase (361 aa).

Residue Arg-43 coordinates L-glutamate. Pyridoxal 5'-phosphate contacts are provided by Trp-103, Thr-153, Asp-173, and Gln-196. Position 197 is an N6-(pyridoxal phosphate)lysine (Lys-197). Residue 238–239 (NT) participates in pyridoxal 5'-phosphate binding.

Belongs to the class-V pyridoxal-phosphate-dependent aminotransferase family. SerC subfamily. Homodimer. It depends on pyridoxal 5'-phosphate as a cofactor.

It localises to the cytoplasm. It catalyses the reaction O-phospho-L-serine + 2-oxoglutarate = 3-phosphooxypyruvate + L-glutamate. The catalysed reaction is 4-(phosphooxy)-L-threonine + 2-oxoglutarate = (R)-3-hydroxy-2-oxo-4-phosphooxybutanoate + L-glutamate. The protein operates within amino-acid biosynthesis; L-serine biosynthesis; L-serine from 3-phospho-D-glycerate: step 2/3. It participates in cofactor biosynthesis; pyridoxine 5'-phosphate biosynthesis; pyridoxine 5'-phosphate from D-erythrose 4-phosphate: step 3/5. Catalyzes the reversible conversion of 3-phosphohydroxypyruvate to phosphoserine and of 3-hydroxy-2-oxo-4-phosphonooxybutanoate to phosphohydroxythreonine. This Hahella chejuensis (strain KCTC 2396) protein is Phosphoserine aminotransferase.